The primary structure comprises 88 residues: MKKDIHPDYHAVVFQDAGTGFQFLTKSTASSDRTVSWEDGNEYPLIVVDVTSESHPFWTGAQRVMDTAGRVEKFERRFGGMARRKKKA.

It belongs to the bacterial ribosomal protein bL31 family. Type B subfamily. In terms of assembly, part of the 50S ribosomal subunit.

This is Large ribosomal subunit protein bL31B from Corynebacterium glutamicum (strain R).